We begin with the raw amino-acid sequence, 147 residues long: Hemoglobin subunit beta (147 aa).

One can recognise a Globin domain in the interval 3-147; the sequence is HWTPEEKQYI…VAHALALGYH (145 aa). Residues His64 and His93 each contribute to the heme b site.

Belongs to the globin family. In terms of assembly, heterotetramer of two alpha-D chains and two beta chains. In terms of tissue distribution, red blood cells.

Its function is as follows. Involved in oxygen transport from the lung to the various peripheral tissues. The polypeptide is Hemoglobin subunit beta (HBB) (Chelonoidis niger (Galapagos giant tortoise)).